The following is a 1138-amino-acid chain: uncharacterized protein (1138 aa).

Disordered stretches follow at residues 985–1015 (EKKLPTHETNSEIEKEKHSDGKRKESKMAQE) and 1094–1138 (LVAT…QNKL). Over residues 1110–1138 (DDDEYEKYDSGIEDIETDVDEEEEVQNKL) the composition is skewed to acidic residues.

This is an uncharacterized protein from Ostreid herpesvirus 1 (isolate France) (OsHV-1).